A 332-amino-acid polypeptide reads, in one-letter code: L-lactate dehydrogenase A chain (332 aa).

Residues 29-57 (GAVGMACAISILMKDLADELTLVDVVEDK) and Arg-99 contribute to the NAD(+) site. Substrate-binding residues include Arg-106, Asn-138, and Arg-169. Residue Asn-138 coordinates NAD(+). The active-site Proton acceptor is His-193. Substrate is bound at residue Thr-248.

It belongs to the LDH/MDH superfamily. LDH family. Homotetramer.

Its subcellular location is the cytoplasm. The enzyme catalyses (S)-lactate + NAD(+) = pyruvate + NADH + H(+). It functions in the pathway fermentation; pyruvate fermentation to lactate; (S)-lactate from pyruvate: step 1/1. Its function is as follows. Interconverts simultaneously and stereospecifically pyruvate and lactate with concomitant interconversion of NADH and NAD(+). In Gallus gallus (Chicken), this protein is L-lactate dehydrogenase A chain (LDHA).